A 128-amino-acid chain; its full sequence is Small ribosomal subunit protein eS8 (128 aa).

The disordered stretch occupies residues 1 to 37; it reads MGYFQGNDFRKITGGKKGKHRDKRKFELGSPPTETKL. Basic residues predominate over residues 13–23; sequence TGGKKGKHRDK.

It belongs to the eukaryotic ribosomal protein eS8 family. As to quaternary structure, part of the 30S ribosomal subunit.

This Sulfurisphaera tokodaii (strain DSM 16993 / JCM 10545 / NBRC 100140 / 7) (Sulfolobus tokodaii) protein is Small ribosomal subunit protein eS8.